The primary structure comprises 367 residues: DNA replication and repair protein RecF (367 aa).

30–37 (GANGSGKT) serves as a coordination point for ATP.

This sequence belongs to the RecF family.

It localises to the cytoplasm. The RecF protein is involved in DNA metabolism; it is required for DNA replication and normal SOS inducibility. RecF binds preferentially to single-stranded, linear DNA. It also seems to bind ATP. The chain is DNA replication and repair protein RecF from Pseudomonas entomophila (strain L48).